A 194-amino-acid chain; its full sequence is Fe/S biogenesis protein NfuA (194 aa).

[4Fe-4S] cluster is bound by residues cysteine 152 and cysteine 155.

It belongs to the NfuA family. Homodimer. It depends on [4Fe-4S] cluster as a cofactor.

Involved in iron-sulfur cluster biogenesis. Binds a 4Fe-4S cluster, can transfer this cluster to apoproteins, and thereby intervenes in the maturation of Fe/S proteins. Could also act as a scaffold/chaperone for damaged Fe/S proteins. In Pseudomonas putida (strain GB-1), this protein is Fe/S biogenesis protein NfuA.